A 1361-amino-acid polypeptide reads, in one-letter code: DNA-directed RNA polymerase subunit beta (1361 aa).

This sequence belongs to the RNA polymerase beta chain family. The RNAP catalytic core consists of 2 alpha, 1 beta, 1 beta' and 1 omega subunit. When a sigma factor is associated with the core the holoenzyme is formed, which can initiate transcription.

It carries out the reaction RNA(n) + a ribonucleoside 5'-triphosphate = RNA(n+1) + diphosphate. In terms of biological role, DNA-dependent RNA polymerase catalyzes the transcription of DNA into RNA using the four ribonucleoside triphosphates as substrates. The polypeptide is DNA-directed RNA polymerase subunit beta (Saccharophagus degradans (strain 2-40 / ATCC 43961 / DSM 17024)).